Here is a 593-residue protein sequence, read N- to C-terminus: NADH-quinone oxidoreductase subunit C/D (593 aa).

The tract at residues 1 to 184 (MTADNAIFIP…DPYSLTLAKQ (184 aa)) is NADH dehydrogenase I subunit C. The NADH dehydrogenase I subunit D stretch occupies residues 208–593 (DYMFLNLGPN…IDFVMADVDR (386 aa)).

It in the N-terminal section; belongs to the complex I 30 kDa subunit family. In the C-terminal section; belongs to the complex I 49 kDa subunit family. NDH-1 is composed of 13 different subunits. Subunits NuoB, CD, E, F, and G constitute the peripheral sector of the complex.

It localises to the cell inner membrane. The enzyme catalyses a quinone + NADH + 5 H(+)(in) = a quinol + NAD(+) + 4 H(+)(out). Functionally, NDH-1 shuttles electrons from NADH, via FMN and iron-sulfur (Fe-S) centers, to quinones in the respiratory chain. The immediate electron acceptor for the enzyme in this species is believed to be ubiquinone. Couples the redox reaction to proton translocation (for every two electrons transferred, four hydrogen ions are translocated across the cytoplasmic membrane), and thus conserves the redox energy in a proton gradient. In Pseudomonas putida (strain ATCC 700007 / DSM 6899 / JCM 31910 / BCRC 17059 / LMG 24140 / F1), this protein is NADH-quinone oxidoreductase subunit C/D.